Consider the following 467-residue polypeptide: Cruzipain (467 aa).

A signal peptide spans Met1–Ala18. The propeptide at Cys19–Gly122 is activation peptide. 3 disulfides stabilise this stretch: Cys144/Cys185, Cys178/Cys223, and Cys277/Cys325. Residue Cys147 is part of the active site. Residue Asn169 is glycosylated (N-linked (GlcNAc...) asparagine). His284 is a catalytic residue. A glycan (N-linked (GlcNAc...) asparagine) is linked at Asn292. Asn304 is an active-site residue. Residues Ser333–Gly355 are disordered. Positions Pro345–Pro354 are enriched in low complexity. A glycan (N-linked (GlcNAc...) asparagine) is linked at Asn377.

The protein belongs to the peptidase C1 family.

The enzyme catalyses Broad endopeptidase specificity similar to that of cathepsin L.. Its activity is regulated as follows. Strongly inhibited by E-64 (L-trans-epoxysuccinylleucylamido(4-guanidino)butane), Leupeptin, and N-alpha-p-tosyl-L-lysine chloromethyl ketone. Hydrolyzes chromogenic peptides at the carboxyl Arg or Lys; requires at least one more amino acid, preferably Arg, Phe, Val or Leu, between the terminal Arg or Lys and the amino-blocking group. Functionally, the cysteine protease may play an important role in the development and differentiation of the parasites at several stages of their life cycle. The polypeptide is Cruzipain (Trypanosoma cruzi).